A 156-amino-acid polypeptide reads, in one-letter code: Superoxide dismutase [Cu-Zn] 2 (156 aa).

Cu cation is bound by residues His-47, His-49, and His-64. Residues Cys-58 and Cys-147 are joined by a disulfide bond. Zn(2+) is bound by residues His-64, His-72, His-81, and Asp-84. His-121 is a Cu cation binding site.

It belongs to the Cu-Zn superoxide dismutase family. As to quaternary structure, homodimer. The cofactor is Cu cation. Zn(2+) serves as cofactor.

Its subcellular location is the cytoplasm. It catalyses the reaction 2 superoxide + 2 H(+) = H2O2 + O2. Its function is as follows. Destroys radicals which are normally produced within the cells and which are toxic to biological systems. This is Superoxide dismutase [Cu-Zn] 2 (SODCC.2) from Mesembryanthemum crystallinum (Common ice plant).